A 402-amino-acid polypeptide reads, in one-letter code: Putative polyketide beta-ketoacyl synthase 2 (402 aa).

Disordered regions lie at residues 1–30 (MTPV…WAPR) and 188–222 (VEPR…FDRD). Residues 1–400 (MTPVAVTGMG…GFNSALVVRA (400 aa)) form the Ketosynthase family 3 (KS3) domain. Over residues 192-205 (SAPGAGSPSSPAGG) the composition is skewed to low complexity.

It belongs to the thiolase-like superfamily. Beta-ketoacyl-ACP synthases family.

It functions in the pathway antifungal biosynthesis; monensin biosynthesis. The protein is Putative polyketide beta-ketoacyl synthase 2 of Streptomyces virginiae (Streptomyces cinnamonensis).